Consider the following 283-residue polypeptide: Acetylglutamate kinase (283 aa).

Substrate is bound by residues 63 to 64 (GG), Arg85, and Asn179.

The protein belongs to the acetylglutamate kinase family. ArgB subfamily.

The protein resides in the cytoplasm. The enzyme catalyses N-acetyl-L-glutamate + ATP = N-acetyl-L-glutamyl 5-phosphate + ADP. It participates in amino-acid biosynthesis; L-arginine biosynthesis; N(2)-acetyl-L-ornithine from L-glutamate: step 2/4. Catalyzes the ATP-dependent phosphorylation of N-acetyl-L-glutamate. This is Acetylglutamate kinase from Clostridium kluyveri (strain NBRC 12016).